The primary structure comprises 490 residues: Glutamyl-tRNA(Gln) amidotransferase subunit A (490 aa).

Catalysis depends on charge relay system residues Lys-78 and Ser-153. The active-site Acyl-ester intermediate is the Ser-177.

Belongs to the amidase family. GatA subfamily. In terms of assembly, heterotrimer of A, B and C subunits.

The enzyme catalyses L-glutamyl-tRNA(Gln) + L-glutamine + ATP + H2O = L-glutaminyl-tRNA(Gln) + L-glutamate + ADP + phosphate + H(+). Functionally, allows the formation of correctly charged Gln-tRNA(Gln) through the transamidation of misacylated Glu-tRNA(Gln) in organisms which lack glutaminyl-tRNA synthetase. The reaction takes place in the presence of glutamine and ATP through an activated gamma-phospho-Glu-tRNA(Gln). In Desulforapulum autotrophicum (strain ATCC 43914 / DSM 3382 / VKM B-1955 / HRM2) (Desulfobacterium autotrophicum), this protein is Glutamyl-tRNA(Gln) amidotransferase subunit A.